The following is a 320-amino-acid chain: Ribose-phosphate pyrophosphokinase 1 (320 aa).

Residues 39 to 41 (DGE) and 98 to 99 (RQ) each bind ATP. Mg(2+)-binding residues include His-132 and Asp-173. The active site involves Lys-196. D-ribose 5-phosphate is bound by residues Arg-198, Asp-224, and 228–232 (DTAGT).

The protein belongs to the ribose-phosphate pyrophosphokinase family. Class I subfamily. As to quaternary structure, homohexamer. The cofactor is Mg(2+).

It localises to the cytoplasm. It carries out the reaction D-ribose 5-phosphate + ATP = 5-phospho-alpha-D-ribose 1-diphosphate + AMP + H(+). The protein operates within metabolic intermediate biosynthesis; 5-phospho-alpha-D-ribose 1-diphosphate biosynthesis; 5-phospho-alpha-D-ribose 1-diphosphate from D-ribose 5-phosphate (route I): step 1/1. In terms of biological role, involved in the biosynthesis of the central metabolite phospho-alpha-D-ribosyl-1-pyrophosphate (PRPP) via the transfer of pyrophosphoryl group from ATP to 1-hydroxyl of ribose-5-phosphate (Rib-5-P). This chain is Ribose-phosphate pyrophosphokinase 1, found in Streptococcus pyogenes serotype M1.